A 325-amino-acid polypeptide reads, in one-letter code: Biotin synthase (325 aa).

Positions 49 to 267 (TQVQISTLLS…IAAARISMPR (219 aa)) constitute a Radical SAM core domain. [4Fe-4S] cluster-binding residues include cysteine 64, cysteine 68, and cysteine 71. [2Fe-2S] cluster is bound by residues cysteine 108, cysteine 139, cysteine 199, and arginine 271.

Belongs to the radical SAM superfamily. Biotin synthase family. Homodimer. Requires [4Fe-4S] cluster as cofactor. [2Fe-2S] cluster is required as a cofactor.

It carries out the reaction (4R,5S)-dethiobiotin + (sulfur carrier)-SH + 2 reduced [2Fe-2S]-[ferredoxin] + 2 S-adenosyl-L-methionine = (sulfur carrier)-H + biotin + 2 5'-deoxyadenosine + 2 L-methionine + 2 oxidized [2Fe-2S]-[ferredoxin]. Its pathway is cofactor biosynthesis; biotin biosynthesis; biotin from 7,8-diaminononanoate: step 2/2. Its function is as follows. Catalyzes the conversion of dethiobiotin (DTB) to biotin by the insertion of a sulfur atom into dethiobiotin via a radical-based mechanism. In Acidiphilium cryptum (strain JF-5), this protein is Biotin synthase.